The following is a 443-amino-acid chain: Probable glycine dehydrogenase (decarboxylating) subunit 1 (443 aa).

Belongs to the GcvP family. N-terminal subunit subfamily. As to quaternary structure, the glycine cleavage system is composed of four proteins: P, T, L and H. In this organism, the P 'protein' is a heterodimer of two subunits.

It catalyses the reaction N(6)-[(R)-lipoyl]-L-lysyl-[glycine-cleavage complex H protein] + glycine + H(+) = N(6)-[(R)-S(8)-aminomethyldihydrolipoyl]-L-lysyl-[glycine-cleavage complex H protein] + CO2. Functionally, the glycine cleavage system catalyzes the degradation of glycine. The P protein binds the alpha-amino group of glycine through its pyridoxal phosphate cofactor; CO(2) is released and the remaining methylamine moiety is then transferred to the lipoamide cofactor of the H protein. The polypeptide is Probable glycine dehydrogenase (decarboxylating) subunit 1 (Nitratidesulfovibrio vulgaris (strain DP4) (Desulfovibrio vulgaris)).